The chain runs to 270 residues: Sulfur carrier protein FdhD (270 aa).

Catalysis depends on Cys-108, which acts as the Cysteine persulfide intermediate. A Mo-bis(molybdopterin guanine dinucleotide)-binding site is contributed by 247-252; it reads FIRDGR.

The protein belongs to the FdhD family.

Its subcellular location is the cytoplasm. Its function is as follows. Required for formate dehydrogenase (FDH) activity. Acts as a sulfur carrier protein that transfers sulfur from IscS to the molybdenum cofactor prior to its insertion into FDH. This Halalkalibacterium halodurans (strain ATCC BAA-125 / DSM 18197 / FERM 7344 / JCM 9153 / C-125) (Bacillus halodurans) protein is Sulfur carrier protein FdhD.